We begin with the raw amino-acid sequence, 127 residues long: MLISGSLAAIIHLFLSRQQEHDGFTQQEWMISIEQMMNECKESQAVKTAEHGSVLICTNLSGQDIRFDIYHSMIRKRVDGKGHVPILDHITAMKADIENGVVLLKIESEDQKVYQTAFPVYSYLGGG.

The transformation pili are flexible filaments, consisting mainly of the major pilin ComGC and smaller amounts of the minor pilins, including at least ComGD, ComGF and ComGG. Interacts with ComGD. Interacts with ComGG.

Its subcellular location is the cell membrane. It is found in the fimbrium. Its function is as follows. Required for formation of the type IV-like pilus (T4P) that plays a role in transformation. Involved in transformation. Transformation pili are dynamically extended and retracted, perhaps thereby promoting DNA uptake and transformation. Required for transformation and DNA binding. This chain is Competence protein ComGF (comGF), found in Bacillus subtilis (strain 168).